A 300-amino-acid chain; its full sequence is Light-independent protochlorophyllide reductase iron-sulfur ATP-binding protein (300 aa).

Residues 43–48 (GIGKST) and K72 each bind ATP. Position 47 (S47) interacts with Mg(2+). C128 and C162 together coordinate [4Fe-4S] cluster. An ATP-binding site is contributed by 213–214 (NR).

Belongs to the NifH/BchL/ChlL family. Homodimer. Protochlorophyllide reductase is composed of three subunits; ChlL, ChlN and ChlB. [4Fe-4S] cluster serves as cofactor.

The catalysed reaction is chlorophyllide a + oxidized 2[4Fe-4S]-[ferredoxin] + 2 ADP + 2 phosphate = protochlorophyllide a + reduced 2[4Fe-4S]-[ferredoxin] + 2 ATP + 2 H2O. It functions in the pathway porphyrin-containing compound metabolism; chlorophyll biosynthesis (light-independent). Component of the dark-operative protochlorophyllide reductase (DPOR) that uses Mg-ATP and reduced ferredoxin to reduce ring D of protochlorophyllide (Pchlide) to form chlorophyllide a (Chlide). This reaction is light-independent. The L component serves as a unique electron donor to the NB-component of the complex, and binds Mg-ATP. This chain is Light-independent protochlorophyllide reductase iron-sulfur ATP-binding protein, found in Synechococcus sp. (strain RCC307).